A 292-amino-acid polypeptide reads, in one-letter code: Small ribosomal subunit protein uS5 (292 aa).

Positions 1–56 are disordered; sequence MADDAGAAGGPGGPGGPGMGGRGGFRGGFGSGIRGRGRGRGRGRGRGRGARGGKAE. A2 is modified (N-acetylalanine). A compositionally biased stretch (gly residues) spans 7-34; sequence AAGGPGGPGGPGMGGRGGFRGGFGSGIR. Positions 35 to 51 are enriched in basic residues; that stretch reads GRGRGRGRGRGRGRGAR. Glycyl lysine isopeptide (Lys-Gly) (interchain with G-Cter in ubiquitin) cross-links involve residues K54 and K58. The S5 DRBM domain occupies 102–165; sequence LKDEVLKIMP…ILAKLSIVPV (64 aa). A Phosphothreonine modification is found at T251. K262 is subject to N6-acetyllysine. Residue S263 is modified to Phosphoserine. T269 bears the Phosphothreonine mark. K274 carries the post-translational modification N6-acetyllysine; alternate. A Glycyl lysine isopeptide (Lys-Gly) (interchain with G-Cter in SUMO1); alternate cross-link involves residue K274. Residue K274 forms a Glycyl lysine isopeptide (Lys-Gly) (interchain with G-Cter in SUMO2); alternate linkage. K274 participates in a covalent cross-link: Glycyl lysine isopeptide (Lys-Gly) (interchain with G-Cter in ubiquitin); alternate. S280 is modified (phosphoserine).

This sequence belongs to the universal ribosomal protein uS5 family. Component of the small ribosomal subunit. Interacts with zinc finger protein ZNF277 (via zinc-finger domains); the interaction is direct; the interaction is extra-ribosomal. Interaction with ZNF277 competes with the binding of RPS2 to protein arginine methyltransferase PRMT3. Citrullinated by PADI4 in the Arg/Gly-rich region. Post-translationally, asymmetric arginine dimethylation by PRMT3 occurs at multiple sites in the Arg/Gly-rich region. In terms of processing, monoubiquitinated at Lys-54 and Lys-58 by RNF10 when a ribosome has stalled during translation, leading to its degradation by the proteasome. Deubiquitinated at Lys-54 and Lys-58 by USP10, preventing degradation by the proteasome and promoting 40S ribosome subunit recycling following ribosome dissociation.

Its subcellular location is the cytoplasm. It localises to the nucleus. It is found in the nucleolus. Its function is as follows. Component of the ribosome, a large ribonucleoprotein complex responsible for the synthesis of proteins in the cell. The small ribosomal subunit (SSU) binds messenger RNAs (mRNAs) and translates the encoded message by selecting cognate aminoacyl-transfer RNA (tRNA) molecules. The large subunit (LSU) contains the ribosomal catalytic site termed the peptidyl transferase center (PTC), which catalyzes the formation of peptide bonds, thereby polymerizing the amino acids delivered by tRNAs into a polypeptide chain. The nascent polypeptides leave the ribosome through a tunnel in the LSU and interact with protein factors that function in enzymatic processing, targeting, and the membrane insertion of nascent chains at the exit of the ribosomal tunnel. Plays a role in the assembly and function of the 40S ribosomal subunit. The protein is Small ribosomal subunit protein uS5 (RPS2) of Oryctolagus cuniculus (Rabbit).